Consider the following 1005-residue polypeptide: Espin-like protein (1005 aa).

ANK repeat units lie at residues methionine 1–isoleucine 31, leucine 35–asparagine 64, asparagine 69–aspartate 99, serine 103–leucine 132, glutamate 136–glutamine 166, serine 170–leucine 200, aspartate 204–alanine 234, glutamate 238–arginine 267, tryptophan 270–leucine 299, and aspartate 303–valine 332. 2 disordered regions span residues glutamate 355–glutamate 383 and alanine 458–glutamine 480. The segment covering alanine 458–glutamine 469 has biased composition (basic and acidic residues). A coiled-coil region spans residues glutamate 502 to leucine 539. Disordered stretches follow at residues leucine 611–isoleucine 643, proline 692–leucine 729, leucine 764–glycine 794, and proline 951–serine 975.

Interacts with MYO3A (via C-terminus). Interacts with MYO3B (via C-terminus). Expressed in inner ear hair cells. Expressed in utricle hair bundles (at protein level). Expressed in choclea (at protein level).

Its subcellular location is the cell projection. It localises to the stereocilium. In terms of biological role, binds to but does not cross-link actin. Required for the formation and maintenance of inner ear hair cell stereocilia and staircase formation. Essential for normal hearing. This Mus musculus (Mouse) protein is Espin-like protein (Espnl).